Consider the following 732-residue polypeptide: 1,4-alpha-glucan branching enzyme GlgB 1 (732 aa).

Aspartate 411 functions as the Nucleophile in the catalytic mechanism. Catalysis depends on glutamate 464, which acts as the Proton donor.

Belongs to the glycosyl hydrolase 13 family. GlgB subfamily. As to quaternary structure, monomer.

It carries out the reaction Transfers a segment of a (1-&gt;4)-alpha-D-glucan chain to a primary hydroxy group in a similar glucan chain.. Its pathway is glycan biosynthesis; glycogen biosynthesis. In terms of biological role, catalyzes the formation of the alpha-1,6-glucosidic linkages in glycogen by scission of a 1,4-alpha-linked oligosaccharide from growing alpha-1,4-glucan chains and the subsequent attachment of the oligosaccharide to the alpha-1,6 position. This chain is 1,4-alpha-glucan branching enzyme GlgB 1, found in Xanthomonas euvesicatoria pv. vesicatoria (strain 85-10) (Xanthomonas campestris pv. vesicatoria).